The primary structure comprises 421 residues: Synaptotagmin-15 (421 aa).

At 1-4 (MAEQ) the chain is on the extracellular side. The chain crosses the membrane as a helical; Signal-anchor for type III membrane protein span at residues 5-29 (LALVIGGTIGGLLLLLLIGASCCLW). Residues 30–421 (RRFCATLTYE…WHALCRTTEP (392 aa)) lie on the Cytoplasmic side of the membrane. The disordered stretch occupies residues 47–68 (MATTAASSGQRDRPCQPHARTQ). C2 domains follow at residues 147–264 (CLGR…RRVI) and 278–399 (EFGD…EHWD).

This sequence belongs to the synaptotagmin family. Homodimer.

It localises to the cell membrane. May be involved in the trafficking and exocytosis of secretory vesicles in non-neuronal tissues. The protein is Synaptotagmin-15 (SYT15) of Homo sapiens (Human).